The chain runs to 184 residues: Putative F-box protein At4g22420 (184 aa).

The 46-residue stretch at 1–46 (MAECPTDLINEMFLRLRATTLKKCRVLSKPCFSLIDSPEKRVIERS) folds into the F-box domain. A disordered region spans residues 68-126 (DDDEEEGNELKKSQARRNGVAKGEGNGNKVNGEAQEEVDDEEDDDDDASKGRGKHSRHV). The span at 85 to 100 (NGVAKGEGNGNKVNGE) shows a compositional bias: low complexity. Residues 101–114 (AQEEVDDEEDDDDD) are compositionally biased toward acidic residues.

This Arabidopsis thaliana (Mouse-ear cress) protein is Putative F-box protein At4g22420.